A 7705-amino-acid polypeptide reads, in one-letter code: Copine family protein 2 (7705 aa).

Disordered stretches follow at residues 1–61 (MNDY…RHSE), 269–360 (KEGN…NNSQ), 372–408 (SERK…HQQP), 464–492 (GDRA…TSSV), 506–538 (STEP…TADG), 560–614 (DERA…QGPP), 1301–1358 (NRSE…DQQV), 4381–4427 (ELEP…RSES), and 6779–6800 (RDEH…GKFT). Residues 12 to 25 (SSQKSNNQKISNNS) show a composition bias toward low complexity. Residues 269–282 (KEGNNPSCCRERGT) are compositionally biased toward basic and acidic residues. Residues 302–313 (STSTKVAVTSAS) are compositionally biased toward low complexity. Residues 318-336 (IKDHKKQLKKEKEKKKKMD) are compositionally biased toward basic residues. Basic and acidic residues predominate over residues 372–404 (SERKTAKQREQELLQRSERRSGGRTHSHEEYRR). Positions 522 to 532 (ASLSSVQQKQP) are enriched in polar residues. The segment covering 560–587 (DERAKDFLRGDRSSRLSPQSERKNERQI) has biased composition (basic and acidic residues). Over residues 588-597 (QIRQQSSGPT) the composition is skewed to polar residues. Basic and acidic residues-rich tracts occupy residues 598-611 (NRRE…EKRQ) and 1301-1335 (NRSE…HTSE). Residues 4397 to 4409 (RQSRVYRSSSQVR) show a composition bias toward low complexity. 2 stretches are compositionally biased toward basic and acidic residues: residues 4411–4427 (PSEE…RSES) and 6779–6797 (RDEH…RDGG). The VWFA domain maps to 7475-7673 (NLIFGIDYTK…FHKVMFNAPN (199 aa)).

It belongs to the copine family. Expressed in body wall muscle.

The sequence is that of Copine family protein 2 (cpna-2) from Caenorhabditis elegans.